Consider the following 708-residue polypeptide: Outer capsid protein mu-1 (708 aa).

A lipid anchor (N-myristoyl glycine; by host) is attached at Gly-2. Residues Asn-3, Asn-12, Asn-81, Asn-110, Asn-458, Asn-482, Asn-528, and Asn-659 are each glycosylated (N-linked (GlcNAc...) asparagine; by host). A disordered region spans residues 675–708 (PKPDCPTSGDSGESSNRRVKRDSYAGVVKRGYTR).

This sequence belongs to the orthoreovirus mu-1 protein family. In terms of assembly, heterohexamer of three sigma-3 and three Mu-1 proteins. Cleaved during the endosomal proteolytic disassembly of the outer capsid. Mu-1 is proteolytically cleaved into mu-1N and mu-1C during the maturation step to generate the ISVP. Cleavage of mu-1 to mu-1C is dependent on myristoylation and binding to sigma-3 protein. Mu-1C is further cleaved into delta (59 kDa), and phi (13 kDa) segments during entry into the host cell cytoplasm. Post-translationally, mu-1 and mu-1N are N-terminally myristoylated. This acylation is essential for the membrane fusion activity.

Its subcellular location is the virion. It is found in the host cell membrane. The protein resides in the host endoplasmic reticulum. The protein localises to the host mitochondrion. In terms of biological role, major outer capsid protein involved in host cell membrane penetration. In the endocytic compartment, outer-capsid protein sigma-3 is removed by cathepsin proteases, which exposes the viral membrane-penetration protein mu-1. Both myristoylated peptides mu-1N and phi are released during infectious subvirion particles (ISVP) formation in the endosome. They associate with host membranes and mu-1N induces permeabilization and delivery of transcriptionally active viral particles into the host cell cytoplasm. Seems to induce apoptosis in the host cell. Its function is as follows. The viral outer shell polypeptides, of which mu-1 is one, impose structural constraints that prevent elongation of nascent transcripts by the RNA-dependent RNA polymerase lambda-3. The chain is Outer capsid protein mu-1 (M2) from Mammalia (T3D).